A 351-amino-acid chain; its full sequence is Pleckstrin (351 aa).

Positions 4 to 101 constitute a PH 1 domain; sequence KRIREGYLVK…WVRDTKKAIK (98 aa). Lys-64 carries the post-translational modification N6-acetyllysine. A phosphoserine mark is found at Ser-113 and Ser-117. The region spanning 136 to 221 is the DEP domain; the sequence is IEKGIKELNL…NPDAFYYFPD (86 aa). Residues 244–348 form the PH 2 domain; that stretch reads VIIKQGCLLK…WIKAIQVASR (105 aa).

Major protein kinase C substrate of platelets. The chain is Pleckstrin (PLEK) from Canis lupus familiaris (Dog).